We begin with the raw amino-acid sequence, 218 residues long: Thiopurine S-methyltransferase (218 aa).

Trp-10, Leu-45, Glu-66, and Arg-123 together coordinate S-adenosyl-L-methionine.

This sequence belongs to the class I-like SAM-binding methyltransferase superfamily. TPMT family.

The protein localises to the cytoplasm. It catalyses the reaction S-adenosyl-L-methionine + a thiopurine = S-adenosyl-L-homocysteine + a thiopurine S-methylether.. The chain is Thiopurine S-methyltransferase from Shewanella denitrificans (strain OS217 / ATCC BAA-1090 / DSM 15013).